Here is a 1188-residue protein sequence, read N- to C-terminus: uncharacterized protein (1188 aa).

Disordered regions lie at residues G126 to E468, E484 to P771, A790 to L823, and Q847 to F1039. 3 stretches are compositionally biased toward pro residues: residues I139–P151, G159–V193, and I208–A240. A Phosphoserine modification is found at S260. Over residues E322–T331 the composition is skewed to basic and acidic residues. The segment covering T389–P418 has biased composition (pro residues). The segment covering K432–L441 has biased composition (low complexity). Basic and acidic residues-rich tracts occupy residues K501–T514 and I566–K583. Low complexity predominate over residues L618–P633. Positions A640–P652 are enriched in pro residues. T666 carries the phosphothreonine modification. A compositionally biased stretch (low complexity) spans P689–S703. Over residues A875–T893 the composition is skewed to polar residues. A compositionally biased stretch (basic and acidic residues) spans L920–R931. The segment covering I986–P1001 has biased composition (pro residues). Positions G1007–D1019 are enriched in polar residues. The span at A1026–G1035 shows a compositional bias: low complexity. Residue R1044 is modified to Asymmetric dimethylarginine. Residues G1069–S1160 are disordered. 2 positions are modified to omega-N-methylarginine: R1073 and R1084. An Asymmetric dimethylarginine modification is found at R1157.

This is an uncharacterized protein from Homo sapiens (Human).